The chain runs to 311 residues: Probable dihydroorotate dehydrogenase A (fumarate) (311 aa).

Residues S20 and 44–45 (KT) each bind FMN. Residues K44, 68–72 (NSMGL), and N127 each bind substrate. An FMN-binding site is contributed by N127. Catalysis depends on C130, which acts as the Nucleophile. The FMN site is built by K164 and I192. 193–194 (NS) contributes to the substrate binding site. FMN is bound by residues G221, 249-250 (GG), and 271-272 (GT).

This sequence belongs to the dihydroorotate dehydrogenase family. Type 1 subfamily. Homodimer. The cofactor is FMN.

It is found in the cytoplasm. The enzyme catalyses (S)-dihydroorotate + fumarate = orotate + succinate. It participates in pyrimidine metabolism; UMP biosynthesis via de novo pathway. In terms of biological role, catalyzes the conversion of dihydroorotate to orotate with fumarate as the electron acceptor. This is Probable dihydroorotate dehydrogenase A (fumarate) (pyrDA) from Enterococcus faecalis (strain ATCC 700802 / V583).